A 104-amino-acid polypeptide reads, in one-letter code: U20-lycotoxin-Ls1a (104 aa).

The first 30 residues, M1–A30, serve as a signal peptide directing secretion. Positions G31–S76 constitute a WAP domain. Intrachain disulfides connect C34-C64, C42-C68, C51-C63, C52-C90, and C57-C72.

It belongs to the venom protein 11 family. 02 (wap-2) subfamily. Contains 5 disulfide bonds. In terms of tissue distribution, expressed by the venom gland.

Its subcellular location is the secreted. Its function is as follows. Has antibacterial activity. The polypeptide is U20-lycotoxin-Ls1a (Lycosa singoriensis (Wolf spider)).